The sequence spans 437 residues: Trigger factor (437 aa).

Positions 161-246 constitute a PPIase FKBP-type domain; that stretch reads DDQVNIDFVG…VNSVSAPVLP (86 aa).

This sequence belongs to the FKBP-type PPIase family. Tig subfamily.

It localises to the cytoplasm. It catalyses the reaction [protein]-peptidylproline (omega=180) = [protein]-peptidylproline (omega=0). In terms of biological role, involved in protein export. Acts as a chaperone by maintaining the newly synthesized protein in an open conformation. Functions as a peptidyl-prolyl cis-trans isomerase. The protein is Trigger factor of Pseudomonas putida (strain ATCC 700007 / DSM 6899 / JCM 31910 / BCRC 17059 / LMG 24140 / F1).